An 800-amino-acid chain; its full sequence is DNA topoisomerase 4 subunit A (800 aa).

One can recognise a Topo IIA-type catalytic domain in the interval 31 to 495 (LPDVRDGLKP…EIEEIKIDKE (465 aa)). Tyr119 functions as the O-(5'-phospho-DNA)-tyrosine intermediate in the catalytic mechanism.

It belongs to the type II topoisomerase GyrA/ParC subunit family. ParC type 2 subfamily. In terms of assembly, heterotetramer composed of ParC and ParE.

Its subcellular location is the cell membrane. The catalysed reaction is ATP-dependent breakage, passage and rejoining of double-stranded DNA.. In terms of biological role, topoisomerase IV is essential for chromosome segregation. It relaxes supercoiled DNA. Performs the decatenation events required during the replication of a circular DNA molecule. The sequence is that of DNA topoisomerase 4 subunit A from Staphylococcus aureus (strain MSSA476).